The following is a 405-amino-acid chain: Tryptophan synthase beta chain (405 aa).

Lysine 96 is subject to N6-(pyridoxal phosphate)lysine.

It belongs to the TrpB family. As to quaternary structure, tetramer of two alpha and two beta chains. Requires pyridoxal 5'-phosphate as cofactor.

It carries out the reaction (1S,2R)-1-C-(indol-3-yl)glycerol 3-phosphate + L-serine = D-glyceraldehyde 3-phosphate + L-tryptophan + H2O. It functions in the pathway amino-acid biosynthesis; L-tryptophan biosynthesis; L-tryptophan from chorismate: step 5/5. In terms of biological role, the beta subunit is responsible for the synthesis of L-tryptophan from indole and L-serine. In Clostridium botulinum (strain Eklund 17B / Type B), this protein is Tryptophan synthase beta chain.